The following is a 620-amino-acid chain: Glutathione-regulated potassium-efflux system protein KefC (620 aa).

12 helical membrane passes run 4 to 24 (HTLLQALIYLGSAALIVPIAV), 26 to 46 (LGLGSVLGYLIAGCIIGPWGL), 54 to 74 (SILHFAEIGVVLMLFVIGLEL), 90 to 110 (GALQMVVCGGLIGLFCMFLGL), 114 to 134 (VAELIGMTLALSSTAIAMQAM), 149 to 169 (FAVLLFQDIAAIPLVAMIPLL), 178 to 198 (LGAFALSALKVAGALALVVLL), 218 to 238 (VFSAVALFLVFGFGLLLEEVG), 270 to 290 (GLLLGLFFIGVGMSIDFGTLV), 294 to 314 (LRILLLLAGFLAIKIVMLWLV), 327 to 347 (WFAVLLGQGSEFAFVVFGAAQ), and 359 to 379 (ALTLAVALSMAATPIFLMLLT). Residues 399-518 (QPRVIVAGFG…AGVAMPERET (120 aa)) form the RCK N-terminal domain. The tract at residues 599-620 (QGTAEGKHSGEAADEPEVKPSI) is disordered.

It belongs to the monovalent cation:proton antiporter 2 (CPA2) transporter (TC 2.A.37) family. KefC subfamily. Homodimer. Interacts with the regulatory subunit KefF.

The protein localises to the cell inner membrane. In terms of biological role, pore-forming subunit of a potassium efflux system that confers protection against electrophiles. Catalyzes K(+)/H(+) antiport. This is Glutathione-regulated potassium-efflux system protein KefC from Salmonella heidelberg (strain SL476).